The following is a 315-amino-acid chain: DNA-directed RNA polymerase subunit alpha (315 aa).

The segment at 1–228 is alpha N-terminal domain (alpha-NTD); sequence MIEIEKPKVD…EHLNLFIDLT (228 aa). An alpha C-terminal domain (alpha-CTD) region spans residues 245–315; sequence KEKVLEMTIE…LGLGLKPSEE (71 aa).

This sequence belongs to the RNA polymerase alpha chain family. Homodimer. The RNAP catalytic core consists of 2 alpha, 1 beta, 1 beta' and 1 omega subunit. When a sigma factor is associated with the core the holoenzyme is formed, which can initiate transcription.

The enzyme catalyses RNA(n) + a ribonucleoside 5'-triphosphate = RNA(n+1) + diphosphate. Its function is as follows. DNA-dependent RNA polymerase catalyzes the transcription of DNA into RNA using the four ribonucleoside triphosphates as substrates. This is DNA-directed RNA polymerase subunit alpha from Clostridioides difficile (strain 630) (Peptoclostridium difficile).